The following is a 286-amino-acid chain: AB hydrolase superfamily protein YfhM (286 aa).

The region spanning 27-272 is the AB hydrolase-1 domain; that stretch reads PLIVLLHGFP…ASHWINHEKP (246 aa). The active-site Nucleophile is the Asp103. Tyr210 (proton donor) is an active-site residue. His265 serves as the catalytic Proton acceptor.

Belongs to the AB hydrolase superfamily. Epoxide hydrolase family.

This chain is AB hydrolase superfamily protein YfhM (yfhM), found in Bacillus subtilis (strain 168).